The sequence spans 534 residues: DNA-directed RNA polymerase III subunit RPC3 (534 aa).

The interval 161-181 is disordered; that stretch reads PSVPTTENSDPGPPPPAPTLV. Ser194 bears the Phosphoserine mark. The interval 197–228 is disordered; it reads GKGKRRRSSDEDAAGEPKAKRPKYTTDNKEPI. Residues 211–228 show a composition bias toward basic and acidic residues; it reads GEPKAKRPKYTTDNKEPI.

It belongs to the eukaryotic RPC3/POLR3C RNA polymerase subunit family. In terms of assembly, component of the RNA polymerase III complex consisting of 17 subunits: a ten-subunit horseshoe-shaped catalytic core composed of POLR3A/RPC1, POLR3B/RPC2, POLR1C/RPAC1, POLR1D/RPAC2, POLR3K/RPC10, POLR2E/RPABC1, POLR2F/RPABC2, POLR2H/RPABC3, POLR2K/RPABC4 and POLR2L/RPABC5; a mobile stalk composed of two subunits POLR3H/RPC8 and CRCP/RPC9, protruding from the core and functioning primarily in transcription initiation; and additional subunits homologous to general transcription factors of the RNA polymerase II machinery, POLR3C/RPC3-POLR3F/RPC6-POLR3G/RPC7 heterotrimer required for transcription initiation and POLR3D/RPC4-POLR3E/RPC5 heterodimer involved in both transcription initiation and termination. Directly interacts with POLR3G/RPC7 and POLR3GL. Directly interacts with POLR3F/RPC6. Interacts with GTF3C4. As part of the RNA polymerase III complex, interacts with PKP2.

Its subcellular location is the nucleus. In terms of biological role, DNA-dependent RNA polymerase catalyzes the transcription of DNA into RNA using the four ribonucleoside triphosphates as substrates. Specific peripheric component of RNA polymerase III (Pol III) which synthesizes small non-coding RNAs including 5S rRNA, snRNAs, tRNAs and miRNAs from at least 500 distinct genomic loci. Part of POLR3C/RPC3-POLR3F/RPC6-POLR3G/RPC7 heterotrimer, coordinates the dynamics of Pol III stalk and clamp modules during the transition from apo to elongation state. Pol III plays a key role in sensing and limiting infection by intracellular bacteria and DNA viruses. Acts as a nuclear and cytosolic DNA sensor involved in innate immune response. Can sense non-self dsDNA that serves as template for transcription into dsRNA. The non-self RNA polymerase III transcripts, such as Epstein-Barr virus-encoded RNAs (EBERs) induce type I interferon and NF-kappa-B through the RIG-I pathway. Preferentially binds single-stranded DNA (ssDNA) in a sequence-independent manner. This Homo sapiens (Human) protein is DNA-directed RNA polymerase III subunit RPC3.